The sequence spans 222 residues: Ribosomal RNA small subunit methyltransferase G (222 aa).

S-adenosyl-L-methionine contacts are provided by residues Gly-85, Leu-90, 108–110 (DAT), 136–137 (VE), and Arg-150.

This sequence belongs to the methyltransferase superfamily. RNA methyltransferase RsmG family.

It is found in the cytoplasm. Functionally, specifically methylates the N7 position of a guanine in 16S rRNA. This Chlorobium phaeobacteroides (strain DSM 266 / SMG 266 / 2430) protein is Ribosomal RNA small subunit methyltransferase G.